Consider the following 463-residue polypeptide: tRNA modification GTPase MnmE (463 aa).

Residues Arg-30, Glu-92, and Arg-132 each coordinate (6S)-5-formyl-5,6,7,8-tetrahydrofolate. Positions 227 to 386 constitute a TrmE-type G domain; the sequence is GLRVALVGRP…LVQAVLERCG (160 aa). Asn-237 contributes to the K(+) binding site. GTP contacts are provided by residues 237-242, 256-262, 281-284, and 342-345; these read NVGKSS, TDLPGTT, DTAG, and NKAD. Ser-241 contributes to the Mg(2+) binding site. K(+) contacts are provided by Thr-256, Leu-258, and Thr-261. A Mg(2+)-binding site is contributed by Thr-262. (6S)-5-formyl-5,6,7,8-tetrahydrofolate is bound at residue Lys-463.

It belongs to the TRAFAC class TrmE-Era-EngA-EngB-Septin-like GTPase superfamily. TrmE GTPase family. In terms of assembly, homodimer. Heterotetramer of two MnmE and two MnmG subunits. Requires K(+) as cofactor.

Its subcellular location is the cytoplasm. Functionally, exhibits a very high intrinsic GTPase hydrolysis rate. Involved in the addition of a carboxymethylaminomethyl (cmnm) group at the wobble position (U34) of certain tRNAs, forming tRNA-cmnm(5)s(2)U34. The protein is tRNA modification GTPase MnmE of Synechococcus sp. (strain CC9311).